The chain runs to 404 residues: Serine/threonine transporter SstT (404 aa).

A run of 9 helical transmembrane segments spans residues 12–32 (GGNL…LALV), 53–73 (AIAP…KEVG), 81–101 (ILVM…VLSF), 140–160 (ALAN…GIAL), 177–197 (AVSF…FGLV), 216–236 (LGVL…LIVF), 287–307 (VAIP…VTVL), 329–349 (IVAS…LLLI), and 356–376 (FNIP…IGVI).

The protein belongs to the dicarboxylate/amino acid:cation symporter (DAACS) (TC 2.A.23) family.

The protein resides in the cell inner membrane. It catalyses the reaction L-serine(in) + Na(+)(in) = L-serine(out) + Na(+)(out). The catalysed reaction is L-threonine(in) + Na(+)(in) = L-threonine(out) + Na(+)(out). Involved in the import of serine and threonine into the cell, with the concomitant import of sodium (symport system). The chain is Serine/threonine transporter SstT from Actinobacillus pleuropneumoniae serotype 7 (strain AP76).